A 238-amino-acid polypeptide reads, in one-letter code: Valine-rich protein (238 aa).

The N-terminal stretch at 1–16 (MQAVLLVVALFGAALA) is a signal peptide.

In terms of tissue distribution, prismatic layer of shell (at protein level). Expressed primarily in the mantle with highest level in the mantle edge and lower level in the mantle pallium.

The protein localises to the secreted. This Pinctada maxima (Silver-lipped pearl oyster) protein is Valine-rich protein.